Here is a 438-residue protein sequence, read N- to C-terminus: Glutamate--tRNA ligase 2 (438 aa).

Positions 6–16 match the 'HIGH' region motif; sequence PSPTGDMHTGN. Positions 231 to 235 match the 'KMSKS' region motif; it reads KMSKR. Lys-234 is a binding site for ATP.

Belongs to the class-I aminoacyl-tRNA synthetase family. Glutamate--tRNA ligase type 1 subfamily. As to quaternary structure, monomer.

Its subcellular location is the cytoplasm. The catalysed reaction is tRNA(Glu) + L-glutamate + ATP = L-glutamyl-tRNA(Glu) + AMP + diphosphate. Functionally, catalyzes the attachment of glutamate to tRNA(Glu) in a two-step reaction: glutamate is first activated by ATP to form Glu-AMP and then transferred to the acceptor end of tRNA(Glu). The chain is Glutamate--tRNA ligase 2 from Wolinella succinogenes (strain ATCC 29543 / DSM 1740 / CCUG 13145 / JCM 31913 / LMG 7466 / NCTC 11488 / FDC 602W) (Vibrio succinogenes).